Here is a 292-residue protein sequence, read N- to C-terminus: Acetylglutamate kinase (292 aa).

Substrate-binding positions include 72–73 (GG), Arg94, and Asn187.

This sequence belongs to the acetylglutamate kinase family. ArgB subfamily.

It localises to the cytoplasm. The catalysed reaction is N-acetyl-L-glutamate + ATP = N-acetyl-L-glutamyl 5-phosphate + ADP. It functions in the pathway amino-acid biosynthesis; L-arginine biosynthesis; N(2)-acetyl-L-ornithine from L-glutamate: step 2/4. Catalyzes the ATP-dependent phosphorylation of N-acetyl-L-glutamate. This is Acetylglutamate kinase from Trichodesmium erythraeum (strain IMS101).